The sequence spans 315 residues: Pantothenate kinase (315 aa).

94 to 101 serves as a coordination point for ATP; the sequence is GSVAVGKS.

This sequence belongs to the prokaryotic pantothenate kinase family.

It is found in the cytoplasm. The catalysed reaction is (R)-pantothenate + ATP = (R)-4'-phosphopantothenate + ADP + H(+). It participates in cofactor biosynthesis; coenzyme A biosynthesis; CoA from (R)-pantothenate: step 1/5. In Shewanella amazonensis (strain ATCC BAA-1098 / SB2B), this protein is Pantothenate kinase.